A 258-amino-acid polypeptide reads, in one-letter code: UDP-N-acetylenolpyruvoylglucosamine reductase (258 aa).

R142 is an active-site residue. S184 functions as the Proton donor in the catalytic mechanism. E254 is an active-site residue.

Belongs to the MurB family. It depends on FAD as a cofactor.

Its subcellular location is the cytoplasm. The catalysed reaction is UDP-N-acetyl-alpha-D-muramate + NADP(+) = UDP-N-acetyl-3-O-(1-carboxyvinyl)-alpha-D-glucosamine + NADPH + H(+). The protein operates within cell wall biogenesis; peptidoglycan biosynthesis. Its function is as follows. Cell wall formation. The polypeptide is UDP-N-acetylenolpyruvoylglucosamine reductase (Campylobacter jejuni subsp. jejuni serotype O:2 (strain ATCC 700819 / NCTC 11168)).